The following is a 424-amino-acid chain: Protein CapL (424 aa).

The protein belongs to the UDP-glucose/GDP-mannose dehydrogenase family.

Its pathway is capsule biogenesis; capsule polysaccharide biosynthesis. Its function is as follows. Required for the biosynthesis of type 1 capsular polysaccharide. The polypeptide is Protein CapL (capL) (Staphylococcus aureus).